The chain runs to 321 residues: Lipoyl synthase (321 aa).

[4Fe-4S] cluster-binding residues include Cys68, Cys73, Cys79, Cys94, Cys98, Cys101, and Ser308. Positions 80–297 (FNHGTATFMI…KELAESIGFT (218 aa)) constitute a Radical SAM core domain.

Belongs to the radical SAM superfamily. Lipoyl synthase family. [4Fe-4S] cluster serves as cofactor.

The protein resides in the cytoplasm. The enzyme catalyses [[Fe-S] cluster scaffold protein carrying a second [4Fe-4S](2+) cluster] + N(6)-octanoyl-L-lysyl-[protein] + 2 oxidized [2Fe-2S]-[ferredoxin] + 2 S-adenosyl-L-methionine + 4 H(+) = [[Fe-S] cluster scaffold protein] + N(6)-[(R)-dihydrolipoyl]-L-lysyl-[protein] + 4 Fe(3+) + 2 hydrogen sulfide + 2 5'-deoxyadenosine + 2 L-methionine + 2 reduced [2Fe-2S]-[ferredoxin]. It functions in the pathway protein modification; protein lipoylation via endogenous pathway; protein N(6)-(lipoyl)lysine from octanoyl-[acyl-carrier-protein]: step 2/2. Catalyzes the radical-mediated insertion of two sulfur atoms into the C-6 and C-8 positions of the octanoyl moiety bound to the lipoyl domains of lipoate-dependent enzymes, thereby converting the octanoylated domains into lipoylated derivatives. The sequence is that of Lipoyl synthase from Shewanella pealeana (strain ATCC 700345 / ANG-SQ1).